The chain runs to 482 residues: ATP synthase subunit beta (482 aa).

162-169 (GGAGVGKT) lines the ATP pocket.

Belongs to the ATPase alpha/beta chains family. F-type ATPases have 2 components, CF(1) - the catalytic core - and CF(0) - the membrane proton channel. CF(1) has five subunits: alpha(3), beta(3), gamma(1), delta(1), epsilon(1). CF(0) has four main subunits: a(1), b(1), b'(1) and c(9-12).

The protein localises to the cellular thylakoid membrane. The enzyme catalyses ATP + H2O + 4 H(+)(in) = ADP + phosphate + 5 H(+)(out). Its function is as follows. Produces ATP from ADP in the presence of a proton gradient across the membrane. The catalytic sites are hosted primarily by the beta subunits. This is ATP synthase subunit beta from Synechococcus sp. (strain PCC 6716).